The following is a 122-amino-acid chain: UPF0102 protein TTE1452 (122 aa).

Belongs to the UPF0102 family.

The polypeptide is UPF0102 protein TTE1452 (Caldanaerobacter subterraneus subsp. tengcongensis (strain DSM 15242 / JCM 11007 / NBRC 100824 / MB4) (Thermoanaerobacter tengcongensis)).